Consider the following 133-residue polypeptide: Transcription antitermination protein NusB (133 aa).

It belongs to the NusB family.

Involved in transcription antitermination. Required for transcription of ribosomal RNA (rRNA) genes. Binds specifically to the boxA antiterminator sequence of the ribosomal RNA (rrn) operons. This is Transcription antitermination protein NusB from Pediococcus pentosaceus (strain ATCC 25745 / CCUG 21536 / LMG 10740 / 183-1w).